Consider the following 394-residue polypeptide: MNTNSKEVLSLGVQVPEAWEELLTMKVEAKSHLQWQESRLKRSNPLAREIFRRHFRQLCYQETPGPREALTRLQELCYQWLRPHVSTKEQILDLLVLEQFLSILPKELQGWVREHCPESGEEAVILLEDLERELDEPQHEMVAHRHRQEVLCKEMVPLAEQTPLTLQSQPKEPQLTCDSAQKCHSIGETDEVTKTEDRELVLRKDCPKIVEPHGKMFNEQTWEVSQQDPSHGEVGEHKDRIERQWGNLLGEGQHKCDECGKSFTQSSGLIRHQRIHTGERPYECNECGKAFSRSSGLFNHRGIHNIQKRYHCKECGKVFSQSAGLIQHQRIHKGEKPYQCSQCSKSYSRRSFLIEHQRSHTGERPHQCIECGKSFNRHCNLIRHQKIHTVAELV.

A Glycyl lysine isopeptide (Lys-Gly) (interchain with G-Cter in SUMO2) cross-link involves residue Lys26. In terms of domain architecture, SCAN box spans 52–134 (RRHFRQLCYQ…ILLEDLEREL (83 aa)). Glycyl lysine isopeptide (Lys-Gly) (interchain with G-Cter in SUMO2) cross-links involve residues Lys215 and Lys238. C2H2-type zinc fingers lie at residues 254–276 (HKCD…QRIH), 282–304 (YECN…RGIH), 310–332 (YHCK…QRIH), 338–360 (YQCS…QRSH), and 366–388 (HQCI…QKIH).

It belongs to the krueppel C2H2-type zinc-finger protein family.

The protein localises to the nucleus. Functionally, may be involved in transcriptional regulation. The chain is Zinc finger and SCAN domain-containing protein 9 (ZSCAN9) from Homo sapiens (Human).